Reading from the N-terminus, the 319-residue chain is L-lactate dehydrogenase (319 aa).

Residues V11, D32, R37, Y62, and G76 to V77 each bind NAD(+). Substrate-binding positions include Q79, R85, and N117 to D120. Residues V115–N117 and S140 contribute to the NAD(+) site. Residue D145 to R148 coordinates substrate. Residues R150 and H165 each contribute to the beta-D-fructose 1,6-bisphosphate site. Residue H172 is the Proton acceptor of the active site. Y217 bears the Phosphotyrosine mark. Position 226 (T226) interacts with substrate.

This sequence belongs to the LDH/MDH superfamily. LDH family. As to quaternary structure, homotetramer.

Its subcellular location is the cytoplasm. It carries out the reaction (S)-lactate + NAD(+) = pyruvate + NADH + H(+). It participates in fermentation; pyruvate fermentation to lactate; (S)-lactate from pyruvate: step 1/1. With respect to regulation, allosterically activated by fructose 1,6-bisphosphate (FBP). Functionally, catalyzes the conversion of lactate to pyruvate. In Thermotoga sp. (strain RQ2), this protein is L-lactate dehydrogenase.